Here is a 651-residue protein sequence, read N- to C-terminus: Probable potassium transport system protein Kup (651 aa).

Helical transmembrane passes span 41-61 (LVLG…IYAF), 82-102 (VVSF…VLFV), 130-150 (LILG…VITP), 163-183 (IVAP…LVTL), 194-214 (VAIV…ASGL), 235-255 (FLTV…LAMT), 276-296 (WLWI…AFIL), 309-329 (MIPS…TVIA), 366-386 (IYIP…VLGF), 395-415 (AYGI…YIVM), 426-446 (ALPI…ANII), and 450-470 (EGGW…WTWV).

It belongs to the HAK/KUP transporter (TC 2.A.72) family.

It is found in the cell inner membrane. The catalysed reaction is K(+)(in) + H(+)(in) = K(+)(out) + H(+)(out). In terms of biological role, transport of potassium into the cell. Likely operates as a K(+):H(+) symporter. This chain is Probable potassium transport system protein Kup, found in Brucella ovis (strain ATCC 25840 / 63/290 / NCTC 10512).